A 184-amino-acid polypeptide reads, in one-letter code: ATP-dependent protease subunit HslV (184 aa).

The active site involves Thr12. The Na(+) site is built by Ala166, Cys169, and Thr172.

Belongs to the peptidase T1B family. HslV subfamily. As to quaternary structure, a double ring-shaped homohexamer of HslV is capped on each side by a ring-shaped HslU homohexamer. The assembly of the HslU/HslV complex is dependent on binding of ATP.

The protein resides in the cytoplasm. It catalyses the reaction ATP-dependent cleavage of peptide bonds with broad specificity.. With respect to regulation, allosterically activated by HslU binding. Functionally, protease subunit of a proteasome-like degradation complex believed to be a general protein degrading machinery. The protein is ATP-dependent protease subunit HslV of Brucella melitensis biotype 1 (strain ATCC 23456 / CCUG 17765 / NCTC 10094 / 16M).